Here is a 44-residue protein sequence, read N- to C-terminus: Photosystem I reaction center subunit IX (44 aa).

The helical transmembrane segment at 7–27 (YLSTAPVLTTLWFGSLAGLLI) threads the bilayer.

This sequence belongs to the PsaJ family.

It localises to the plastid. It is found in the chloroplast thylakoid membrane. May help in the organization of the PsaE and PsaF subunits. This chain is Photosystem I reaction center subunit IX, found in Phalaenopsis aphrodite subsp. formosana (Moth orchid).